The chain runs to 424 residues: Phosphomethylpyrimidine synthase 2 (424 aa).

Substrate is bound by residues Asn65, Met94, Tyr123, His162, 184 to 186 (SRG), 225 to 228 (DGLR), and Glu264. His268 lines the Zn(2+) pocket. Tyr291 contributes to the substrate binding site. Position 332 (His332) interacts with Zn(2+). [4Fe-4S] cluster is bound by residues Cys408, Cys411, and Cys415.

Belongs to the ThiC family. [4Fe-4S] cluster serves as cofactor.

It carries out the reaction 5-amino-1-(5-phospho-beta-D-ribosyl)imidazole + S-adenosyl-L-methionine = 4-amino-2-methyl-5-(phosphooxymethyl)pyrimidine + CO + 5'-deoxyadenosine + formate + L-methionine + 3 H(+). The protein operates within cofactor biosynthesis; thiamine diphosphate biosynthesis. Its function is as follows. Catalyzes the synthesis of the hydroxymethylpyrimidine phosphate (HMP-P) moiety of thiamine from aminoimidazole ribotide (AIR) in a radical S-adenosyl-L-methionine (SAM)-dependent reaction. The chain is Phosphomethylpyrimidine synthase 2 from Methanothermobacter thermautotrophicus (strain ATCC 29096 / DSM 1053 / JCM 10044 / NBRC 100330 / Delta H) (Methanobacterium thermoautotrophicum).